A 723-amino-acid chain; its full sequence is ATP-dependent zinc metalloprotease YME1 homolog (723 aa).

Residues 198–220 (LTRFYIFLVFCIFFGYLTGRIRV) form a helical membrane-spanning segment. 288–295 (GPPGTGKT) provides a ligand contact to ATP. Histidine 509 serves as a coordination point for Zn(2+). Residue glutamate 510 is part of the active site. Zn(2+) contacts are provided by histidine 513 and aspartate 587.

This sequence in the N-terminal section; belongs to the AAA ATPase family. The protein in the C-terminal section; belongs to the peptidase M41 family. Zn(2+) is required as a cofactor.

The protein resides in the mitochondrion inner membrane. The protein localises to the mitochondrion. In terms of biological role, ATP-dependent metalloprotease that catalyzes the degradation of folded and unfolded proteins with a suitable degron sequence in the mitochondrial intermembrane region. Plays an important role in regulating mitochondrial morphology and function. The polypeptide is ATP-dependent zinc metalloprotease YME1 homolog (ymel-1) (Caenorhabditis elegans).